The chain runs to 445 residues: MFTLTKALEKALLQHFIYMKVNIAYAINKPFPFFEALRDNSFITERMYKESLEACQNLVPLSKVVHNILTSLEQTFHPSVLLTLFSKVNLREYPSLVAIFRSFRNVGYTYEEKNRPPLTLLEDLANPAEGCSLQTLLPPPRPQISLPSHLSSAPRVCDPRATAQPIIEILDEQPSPSPRAVPLLGCIQEGKTTPVSSRDHQRKDKEDSREMPHSPSGPESVVKDDSPAANDLEMAREVPCTPANKKARRKKRPNWSNSKRRRQKKKPRQDEMMGVASPGHGVQEKLKAVSRRTLWKDDSSTNVKEVTKTQRTRMRRAQTSNSQEISKEASKTSGRKRPSTARRTTQVPEKTKNDAVDFSPTLPVTCGKAKGTLFQEKLKQGASKKCIQNEAGDWLTVKEFLNEGGRATSKDWKGVIRCNGETLRHLEQKGLLFFTSKSKPQKKGA.

An HSR domain is found at 1–108; the sequence is MFTLTKALEK…IFRSFRNVGY (108 aa). Residues serine 175 and serine 177 each carry the phosphoserine modification. The tract at residues 187-356 is disordered; sequence IQEGKTTPVS…VPEKTKNDAV (170 aa). Positions 197–212 are enriched in basic and acidic residues; it reads SRDHQRKDKEDSREMP. Serine 226 is subject to Phosphoserine. Residues 245–267 show a composition bias toward basic residues; sequence KKARRKKRPNWSNSKRRRQKKKP. The Nuclear localization signal motif lies at 251–266; the sequence is KRPNWSNSKRRRQKKK. The residue at position 277 (serine 277) is a Phosphoserine. The 81-residue stretch at 353–433 folds into the SAND domain; it reads NDAVDFSPTL…RHLEQKGLLF (81 aa).

As to expression, detected in lung and macrophages.

The protein localises to the nucleus. Its function is as follows. May act as a transcription factor. Plays a role in the innate immunity against intracellular pathogens. Required for resistance to M.tuberculosis and L.monocytogenes. Promotes apoptosis of infected cells. The chain is Sp110 nuclear body protein (Sp110) from Mus musculus (Mouse).